We begin with the raw amino-acid sequence, 152 residues long: Protein SprT-like (152 aa).

Positions 6 to 151 constitute a SprT-like domain; the sequence is LQQLVCRISL…SKCLGKLELL (146 aa). His67 contacts Zn(2+). The active site involves Glu68. His71 is a binding site for Zn(2+).

It belongs to the SprT family. The cofactor is Zn(2+).

It is found in the cytoplasm. This Lysinibacillus sphaericus (strain C3-41) protein is Protein SprT-like.